We begin with the raw amino-acid sequence, 240 residues long: Uridylate kinase (240 aa).

12–15 (KLSG) is a binding site for ATP. Residue glycine 54 participates in UMP binding. ATP-binding residues include glycine 55 and arginine 59. Residues aspartate 74 and 135–142 (TGNPFFTT) contribute to the UMP site. Threonine 162, tyrosine 168, and aspartate 171 together coordinate ATP.

The protein belongs to the UMP kinase family. As to quaternary structure, homohexamer.

The protein resides in the cytoplasm. It carries out the reaction UMP + ATP = UDP + ADP. Its pathway is pyrimidine metabolism; CTP biosynthesis via de novo pathway; UDP from UMP (UMPK route): step 1/1. With respect to regulation, inhibited by UTP. Catalyzes the reversible phosphorylation of UMP to UDP. This is Uridylate kinase from Xanthomonas axonopodis pv. citri (strain 306).